Consider the following 374-residue polypeptide: Chorismate synthase (374 aa).

Arginine 55 contributes to the NADP(+) binding site. FMN contacts are provided by residues 132–134 (RGS), glycine 293, 308–312 (KPTPS), and arginine 335.

Belongs to the chorismate synthase family. It depends on FMNH2 as a cofactor.

The catalysed reaction is 5-O-(1-carboxyvinyl)-3-phosphoshikimate = chorismate + phosphate. Its pathway is metabolic intermediate biosynthesis; chorismate biosynthesis; chorismate from D-erythrose 4-phosphate and phosphoenolpyruvate: step 7/7. Its function is as follows. Catalyzes the anti-1,4-elimination of the C-3 phosphate and the C-6 proR hydrogen from 5-enolpyruvylshikimate-3-phosphate (EPSP) to yield chorismate, which is the branch point compound that serves as the starting substrate for the three terminal pathways of aromatic amino acid biosynthesis. This reaction introduces a second double bond into the aromatic ring system. The polypeptide is Chorismate synthase (Methanothermobacter thermautotrophicus (strain ATCC 29096 / DSM 1053 / JCM 10044 / NBRC 100330 / Delta H) (Methanobacterium thermoautotrophicum)).